Reading from the N-terminus, the 360-residue chain is Aurora kinase B (360 aa).

The Protein kinase domain maps to 93–343 (FDIGRPLGKG…LKGVMEHPWV (251 aa)). ATP is bound by residues 99–107 (LGKGKFGNV) and lysine 122. The active-site Proton acceptor is the aspartate 216.

This sequence belongs to the protein kinase superfamily. Ser/Thr protein kinase family. Aurora subfamily. In terms of assembly, component of the chromosomal passenger complex (CPC).

The protein resides in the nucleus. The protein localises to the chromosome. It is found in the centromere. Its subcellular location is the cytoplasm. It localises to the cytoskeleton. The protein resides in the spindle. The protein localises to the midbody. It catalyses the reaction L-seryl-[protein] + ATP = O-phospho-L-seryl-[protein] + ADP + H(+). The catalysed reaction is L-threonyl-[protein] + ATP = O-phospho-L-threonyl-[protein] + ADP + H(+). With respect to regulation, kinase activity is stimulated by cell-cycle specific phosphorylation. Functionally, serine/threonine-protein kinase component of the chromosomal passenger complex (CPC), a complex that acts as a key regulator of mitosis. The CPC complex has essential functions at the centromere in ensuring correct chromosome alignment and segregation and is required for chromatin-induced microtubule stabilization and spindle assembly. Involved in the bipolar attachment of spindle microtubules to kinetochores and is a key regulator for the onset of cytokinesis during mitosis. Required for central/midzone spindle assembly and cleavage furrow formation. Key component of the cytokinesis checkpoint, a process required to delay abscission to prevent both premature resolution of intercellular chromosome bridges and accumulation of DNA damage. Phosphorylates 'Ser-10' of histone H3 during mitosis. In Xenopus tropicalis (Western clawed frog), this protein is Aurora kinase B.